The primary structure comprises 191 residues: LOB domain-containing protein 19 (191 aa).

The LOB domain maps to 15–117; it reads GPCGACKFLR…AELAHVQARL (103 aa).

It belongs to the LOB domain-containing protein family. As to expression, expressed in shoots, roots and floral tissues, but not in stems or leaves.

This is LOB domain-containing protein 19 (LBD19) from Arabidopsis thaliana (Mouse-ear cress).